Reading from the N-terminus, the 307-residue chain is Cuticle collagen 36 (307 aa).

Disordered regions lie at residues 76–102 and 116–307; these read TRSR…GGPT and QQGP…PPGY. Residues 86 to 102 are compositionally biased toward gly residues; it reads EGSGSGGSGSGGYGGPT. Triple-helical region regions lie at residues 89 to 105, 118 to 150, 167 to 187, 194 to 226, 231 to 257, and 260 to 295; these read GSGG…TGAG, GPAG…EGSI, GPQG…KGKS, GKNG…PGRV, GAAG…AGLT, and GGQG…EGSC. The span at 157–168 shows a compositional bias: pro residues; the sequence is PSEPCIICPPGP. Positions 186 to 196 are enriched in basic and acidic residues; that stretch reads KSQERAADGKN. The span at 202-220 shows a compositional bias: pro residues; sequence IGPPGPPGGVGEPGPPGPA. Positions 231 to 242 are enriched in low complexity; the sequence is GAAGPAGPRGVK. Over residues 258 to 278 the composition is skewed to gly residues; that stretch reads EIGGQGPPGDAGGPGPVGGQG. Residues 279–288 show a composition bias toward pro residues; that stretch reads PPGPQGPQGP.

It belongs to the cuticular collagen family. Collagen polypeptide chains are complexed within the cuticle by disulfide bonds and other types of covalent cross-links.

Nematode cuticles are composed largely of collagen-like proteins. The cuticle functions both as an exoskeleton and as a barrier to protect the worm from its environment. The chain is Cuticle collagen 36 (col-36) from Caenorhabditis elegans.